Reading from the N-terminus, the 100-residue chain is MELTPREKDKLLLFTAALVAERRLARGLKLNYPESVALISAFIMEGARDGKSVASLMEEGRHVLTREQVMEGVPEMIPDIQVEATFPDGSKLVTVHNPII.

Belongs to the urease gamma subunit family. As to quaternary structure, heterotrimer of UreA (gamma), UreB (beta) and UreC (alpha) subunits. Three heterotrimers associate to form the active enzyme. The apoenzyme interacts with an accessory complex composed of UreD, UreF and UreG, which is required for the assembly of the nickel containing metallocenter of UreC. The UreE protein may also play a direct role as a metallochaperone in nickel transfer to the urease apoprotein.

It localises to the cytoplasm. It catalyses the reaction urea + 2 H2O + H(+) = hydrogencarbonate + 2 NH4(+). Its pathway is nitrogen metabolism; urea degradation; CO(2) and NH(3) from urea (urease route): step 1/1. The apoenzyme can be activated in vitro in the presence of nickel ions and carbon dioxide, which promotes carbamylation of 'Lys-217' of the UreC (alpha) subunit. This chain is Urease subunit gamma, found in Klebsiella aerogenes (Enterobacter aerogenes).